A 304-amino-acid polypeptide reads, in one-letter code: UDP-N-acetylenolpyruvoylglucosamine reductase (304 aa).

The region spanning arginine 33–glycine 198 is the FAD-binding PCMH-type domain. Residue arginine 177 is part of the active site. Serine 227 acts as the Proton donor in catalysis. The active site involves glutamate 297.

It belongs to the MurB family. FAD is required as a cofactor.

The protein resides in the cytoplasm. It carries out the reaction UDP-N-acetyl-alpha-D-muramate + NADP(+) = UDP-N-acetyl-3-O-(1-carboxyvinyl)-alpha-D-glucosamine + NADPH + H(+). Its pathway is cell wall biogenesis; peptidoglycan biosynthesis. Its function is as follows. Cell wall formation. The chain is UDP-N-acetylenolpyruvoylglucosamine reductase from Clostridium perfringens (strain ATCC 13124 / DSM 756 / JCM 1290 / NCIMB 6125 / NCTC 8237 / Type A).